The chain runs to 723 residues: Ribosome quality control complex subunit 1 (723 aa).

The tract at residues 21 to 125 is disordered; sequence SNSNANKMTS…DKGSDDDDDD (105 aa). A compositionally biased stretch (polar residues) spans 27–37; the sequence is KMTSGKSTAGN. The span at 93-108 shows a compositional bias: basic residues; it reads SSRRKKNKKAKRKQKN. Residues 109-118 show a composition bias toward basic and acidic residues; that stretch reads HTAEAAKDKG. Serine 119 bears the Phosphoserine mark. Threonine 158 carries the phosphothreonine modification. Phosphoserine is present on serine 160.

Belongs to the TCF25 family. In terms of assembly, component of the ribosome quality control complex (RQC), composed of the E3 ubiquitin ligase RKR1/LTN1, RQC1 and RQC2, as well as CDC48 and its ubiquitin-binding cofactors. RQC forms a stable complex with 60S ribosomal subunits.

It is found in the cytoplasm. Functionally, component of the ribosome quality control complex (RQC), a ribosome-associated complex that mediates ubiquitination and extraction of incompletely synthesized nascent chains for proteasomal degradation. Within the RQC complex, RQC1 is essential for the recruitment of CDC48 to incompletely synthesized nascent polypeptides that are ubiquitinated by RKR1/LTN1. The protein is Ribosome quality control complex subunit 1 of Saccharomyces cerevisiae (strain ATCC 204508 / S288c) (Baker's yeast).